The primary structure comprises 905 residues: Heme/hemopexin-binding protein (905 aa).

The N-terminal stretch at 1 to 21 is a signal peptide; that stretch reads MYKLNVISLIILTTYTGATYA.

The protein resides in the secreted. In terms of biological role, binds heme/hemopexin complexes. This is Heme/hemopexin-binding protein (hxuA) from Haemophilus influenzae (strain ATCC 51907 / DSM 11121 / KW20 / Rd).